We begin with the raw amino-acid sequence, 144 residues long: L-fucose mutarotase (144 aa).

His22 acts as the Proton donor in catalysis. Residues Asp30, Arg109, and 131 to 133 (YGN) each bind substrate.

It belongs to the RbsD / FucU family. FucU mutarotase subfamily. In terms of assembly, homodecamer.

The protein localises to the cytoplasm. The catalysed reaction is alpha-L-fucose = beta-L-fucose. The protein operates within carbohydrate metabolism; L-fucose metabolism. Its function is as follows. Involved in the anomeric conversion of L-fucose. This chain is L-fucose mutarotase, found in Histophilus somni (strain 129Pt) (Haemophilus somnus).